The chain runs to 119 residues: Large ribosomal subunit protein bL19 (119 aa).

This sequence belongs to the bacterial ribosomal protein bL19 family.

Its function is as follows. This protein is located at the 30S-50S ribosomal subunit interface and may play a role in the structure and function of the aminoacyl-tRNA binding site. The sequence is that of Large ribosomal subunit protein bL19 from Saccharopolyspora erythraea (strain ATCC 11635 / DSM 40517 / JCM 4748 / NBRC 13426 / NCIMB 8594 / NRRL 2338).